A 235-amino-acid chain; its full sequence is Uridylate kinase (235 aa).

9-12 contacts ATP; sequence KLSG. Residue glycine 51 coordinates UMP. Residues glycine 52 and arginine 56 each coordinate ATP. UMP is bound by residues aspartate 71 and 132–139; that span reads TGNPYFTT. Threonine 159, tyrosine 165, and aspartate 168 together coordinate ATP.

The protein belongs to the UMP kinase family. In terms of assembly, homohexamer.

The protein localises to the cytoplasm. It carries out the reaction UMP + ATP = UDP + ADP. It participates in pyrimidine metabolism; CTP biosynthesis via de novo pathway; UDP from UMP (UMPK route): step 1/1. Its activity is regulated as follows. Inhibited by UTP. Catalyzes the reversible phosphorylation of UMP to UDP. The chain is Uridylate kinase from Cytophaga hutchinsonii (strain ATCC 33406 / DSM 1761 / CIP 103989 / NBRC 15051 / NCIMB 9469 / D465).